The following is a 445-amino-acid chain: E3 ubiquitin-protein ligase pellino homolog 3 (445 aa).

Residues 1–24 are disordered; it reads MVLEGNPDVGSPRTSDLQHPGSQG. Residue S11 is modified to Phosphoserine. Positions 12–24 are enriched in polar residues; it reads PRTSDLQHPGSQG.

It belongs to the pellino family. In terms of assembly, interacts with TRAF6, MAP3K14 and MAP3K7. Phosphorylated by IRAK1 enhancing its E3 ligase activity.

It catalyses the reaction S-ubiquitinyl-[E2 ubiquitin-conjugating enzyme]-L-cysteine + [acceptor protein]-L-lysine = [E2 ubiquitin-conjugating enzyme]-L-cysteine + N(6)-ubiquitinyl-[acceptor protein]-L-lysine.. It participates in protein modification; protein ubiquitination. Functionally, E3 ubiquitin ligase catalyzing the covalent attachment of ubiquitin moieties onto substrate proteins. Involved in the TLR and IL-1 signaling pathways via interaction with the complex containing IRAK kinases and TRAF6. Mediates 'Lys-63'-linked polyubiquitination of IRAK1. Can activate AP1/JUN and ELK1. Acts as a regulator of innate immunity by mediating 'Lys-63'-linked polyubiquitination of RIPK2 downstream of NOD1 and NOD2, thereby transforming RIPK2 into a scaffolding protein for downstream effectors, ultimately leading to activation of the NF-kappa-B and MAP kinases signaling. Catalyzes 'Lys-63'-linked polyubiquitination of RIPK2 in parallel of XIAP. This is E3 ubiquitin-protein ligase pellino homolog 3 from Mus musculus (Mouse).